The chain runs to 138 residues: Phosphoribosyl-AMP cyclohydrolase (138 aa).

Mg(2+) is bound at residue Asp84. Cys85 contacts Zn(2+). Mg(2+) is bound by residues Asp86 and Asp88. Zn(2+) is bound by residues Cys102 and Cys109.

Belongs to the PRA-CH family. As to quaternary structure, homodimer. Mg(2+) is required as a cofactor. Zn(2+) serves as cofactor.

It is found in the cytoplasm. It catalyses the reaction 1-(5-phospho-beta-D-ribosyl)-5'-AMP + H2O = 1-(5-phospho-beta-D-ribosyl)-5-[(5-phospho-beta-D-ribosylamino)methylideneamino]imidazole-4-carboxamide. Its pathway is amino-acid biosynthesis; L-histidine biosynthesis; L-histidine from 5-phospho-alpha-D-ribose 1-diphosphate: step 3/9. In terms of biological role, catalyzes the hydrolysis of the adenine ring of phosphoribosyl-AMP. The protein is Phosphoribosyl-AMP cyclohydrolase of Burkholderia lata (strain ATCC 17760 / DSM 23089 / LMG 22485 / NCIMB 9086 / R18194 / 383).